The primary structure comprises 38 residues: Mu/omega-theraphotoxin-Mb1b (38 aa).

3 cysteine pairs are disulfide-bonded: Cys-7–Cys-21, Cys-14–Cys-26, and Cys-20–Cys-33. Serine amide is present on Ser-38.

This sequence belongs to the neurotoxin 10 (Hwtx-1) family. 28 (Jztx-11) subfamily. As to expression, expressed by the venom gland.

Its subcellular location is the secreted. Functionally, paralytic toxin on insects that inhibits voltage-gated sodium (Nav) and calcium (Cav) channels in P.americana (American cockroach) dorsal unpaired median (DUM) neurons, and also inhibits the B.germanica (German cockroach) Nav channel (BgNaV1). May act as a gating-modifier toxin on Nav and as a pore blocker on Cav. In vivo, reversibly paralyzes both L.cuprina (Australian sheep blowfly) and M.domestica (housefly), but does not affect larvae of H.armigera (cotton bollworms). The sequence is that of Mu/omega-theraphotoxin-Mb1b from Monocentropus balfouri (Socotra Island blue baboon tarantula).